A 253-amino-acid chain; its full sequence is Hydroxyacylglutathione hydrolase (253 aa).

The Zn(2+) site is built by histidine 54, histidine 56, aspartate 58, histidine 59, histidine 110, aspartate 127, and histidine 165.

Belongs to the metallo-beta-lactamase superfamily. Glyoxalase II family. In terms of assembly, monomer. Requires Zn(2+) as cofactor.

It catalyses the reaction an S-(2-hydroxyacyl)glutathione + H2O = a 2-hydroxy carboxylate + glutathione + H(+). The protein operates within secondary metabolite metabolism; methylglyoxal degradation; (R)-lactate from methylglyoxal: step 2/2. In terms of biological role, thiolesterase that catalyzes the hydrolysis of S-D-lactoyl-glutathione to form glutathione and D-lactic acid. The sequence is that of Hydroxyacylglutathione hydrolase from Idiomarina loihiensis (strain ATCC BAA-735 / DSM 15497 / L2-TR).